The sequence spans 195 residues: Rac-like GTP-binding protein ARAC4 (195 aa).

GTP-binding positions include G12 to T19, F30 to T37, D59 to Q63, and T117 to D120. An Effector region motif is present at residues Y34–F42. The residue at position 192 (C192) is a Cysteine methyl ester. C192 carries S-geranylgeranyl cysteine lipidation. The propeptide at A193–L195 is removed in mature form.

The protein belongs to the small GTPase superfamily. Rho family. In terms of assembly, interacts with SPK1, ICR1, ICR5 and PIR. Ubiquitous.

The protein resides in the cytoplasm. It is found in the cell membrane. Inactive GDP-bound Rho GTPases reside in the cytosol, are found in a complex with Rho GDP-dissociation inhibitors (Rho GDIs), and are released from the GDI protein in order to translocate to membranes upon activation. Involved in cell polarity control during the actin-dependent tip growth of root hairs, thus regulating root hair length and root hair initiation. Contributes, in a SPK1-dependent manner, to the prevention of cortical microtubules organization into parallel arrays oriented perpendicular to the axis of cell elongation to limit anisotropic cell growth during petal development. May regulate a WAVE complex that activates the Arp2/3 complex. The polypeptide is Rac-like GTP-binding protein ARAC4 (Arabidopsis thaliana (Mouse-ear cress)).